The chain runs to 654 residues: Endoplasmic reticulum chaperone BiP (654 aa).

Positions 1–18 are cleaved as a signal peptide; that stretch reads MKLSLVAAMLLLLSAARA. The required for interaction with ELAPOR1 stretch occupies residues 1 to 80; it reads MKLSLVAAML…EGERLIGDAA (80 aa). 36–39 contacts ATP; it reads GTTY. Position 86 is a phosphoserine (serine 86). Lysine 96 is an ATP binding site. N6-acetyllysine is present on lysine 125. Positions 125–280 are nucleotide-binding (NBD); sequence KPYIQVDIGG…KKKTGKDVRK (156 aa). Tyrosine 160 is subject to 3'-nitrotyrosine. The residue at position 213 (lysine 213) is an N6-acetyllysine. ATP is bound at residue 227 to 229; it reads GGT. Lysine 271 carries the post-translational modification N6-acetyllysine. Position 293–300 (293–300) interacts with ATP; sequence EKAKRALS. An N6-acetyllysine modification is found at lysine 326. A Glycyl lysine isopeptide (Lys-Gly) (interchain with G-Cter in SUMO2) cross-link involves residue lysine 352. Position 353 is an N6-acetyllysine; alternate (lysine 353). A Glycyl lysine isopeptide (Lys-Gly) (interchain with G-Cter in SUMO1); alternate cross-link involves residue lysine 353. 364–367 lines the ATP pocket; sequence GSTR. An interdomain linker region spans residues 409–419; that stretch reads QDTGDLVLLDV. The segment at 420–500 is substrate-binding (SBD); it reads CPLTLGIETV…PRGVPQIEVT (81 aa). Lysine 447 is subject to N6-succinyllysine. At arginine 492 the chain carries Omega-N-methylarginine. Threonine 518 is subject to O-AMP-threonine; alternate. Residue threonine 518 is modified to Phosphothreonine; alternate. Lysine 585 is modified (N6,N6,N6-trimethyllysine; by METTL21A; in vitro). Lysine 585 is subject to N6,N6-dimethyllysine; alternate. The residue at position 585 (lysine 585) is an N6-methyllysine; alternate. The residue at position 591 (lysine 591) is an N6-methyllysine. Residues 633–654 are disordered; sequence KLYGSAGPPPTGEEDTAEKDEL. Threonine 643 and threonine 648 each carry phosphothreonine. A compositionally biased stretch (acidic residues) spans 644 to 654; sequence GEEDTAEKDEL. A Prevents secretion from ER motif is present at residues 651 to 654; the sequence is KDEL.

It belongs to the heat shock protein 70 family. In terms of assembly, monomer and homooligomer; homooligomerization via the interdomain linker inactivates the chaperone activity and acts as a storage of HSPA5/BiP molecules. Interacts with DNAJC1 (via J domain). Component of an EIF2 complex at least composed of CELF1/CUGBP1, CALR, CALR3, EIF2S1, EIF2S2, HSP90B1 and HSPA5. Part of a large chaperone multiprotein complex comprising DNAJB11, HSP90B1, HSPA5, HYOU, PDIA2, PDIA4, PDIA6, PPIB, SDF2L1, UGGT1 and very small amounts of ERP29, but not, or at very low levels, CALR nor CANX. Interacts with TMEM132A and TRIM21. May form a complex with ERLEC1, OS9, SEL1L and SYVN1. Interacts with DNAJC10. Interacts with DNAJB9/ERdj4; leading to recruit HSPA5/BiP to ERN1/IRE1. Interacts with ERN1/IRE1 (via luminal domain); the interaction takes place following interaction with DNAJB9/ERdj4 and leads to inactivate ERN1/IRE1, the interaction also competitively inhibits ERN1 interaction with MANF. Interacts directly with MANF (via SAP domain); the interaction inhibits ATP binding to HSPA5/BiP and subsequent nucleotide exchange. Interacts with EIF2AK3/PERK (via luminal domain); interaction leads to inactivate EIF2AK3/PERK. Interacts with MX1. Interacts with METTL23. Interacts with CEMIP; the interaction induces calcium leakage from the endoplasmic reticulum and cell migration. Interacts with PCSK4 form; the interaction takes place in the endoplasmic reticulum. Interacts with CIPC. Interacts with CCDC88B (via C-terminus); the interaction opposes ERN1-mediated JNK activation, protecting against apoptosis. Interacts with INPP5K; necessary for INPP5K localization at the endoplasmic reticulum. Interacts with MANF; the interaction is direct. Interacts with LOXL2; leading to activate the ERN1/IRE1-XBP1 pathway of the unfolded protein response. Interacts with CLU under stressed condition; interaction increases CLU protein stability; facilitates its retrotranslocation and redistribution to the mitochondria; cooperatively suppress stress-induced apoptosis by stabilizing mitochondrial membrane integrity. Interacts with CCDC47. Interacts with CLN3. Interacts with ELAPOR1; may regulate the function of HSPA5 in apoptosis and cell proliferation. Interacts with CASP7. Interacts with ILDR2; the interaction stabilizes ILDR2 expression. Interacts with ADAM7. As to quaternary structure, (Microbial infection) Interacts with Japanese encephalitis virus envelope protein E. (Microbial infection) Interacts with R.delemar invasin CotH3 on the surface of nasal epithelial cells. Interacts with R.delemar invasin CotH2. In terms of assembly, (Microbial infection) Interacts with Zika virus envelope protein E and non-structural protein 1 in a chaperone-client manner. Post-translationally, AMPylated by FICD. In unstressed cells, AMPylation at Thr-518 by FICD inactivates the chaperome activity: AMPylated form is locked in a relatively inert state and only weakly stimulated by J domain-containing proteins. In response to endoplasmic reticulum stress, de-AMPylation by the same protein, FICD, restores the chaperone activity.

The protein localises to the endoplasmic reticulum lumen. It is found in the melanosome. Its subcellular location is the cytoplasm. It localises to the cell surface. The enzyme catalyses ATP + H2O = ADP + phosphate + H(+). With respect to regulation, the chaperone activity is regulated by ATP-induced allosteric coupling of the nucleotide-binding (NBD) and substrate-binding (SBD) domains. In the ADP-bound and nucleotide-free (apo) states, the two domains have little interaction. In contrast, in the ATP-bound state the two domains are tightly coupled, which results in drastically accelerated kinetics in both binding and release of polypeptide substrates. J domain-containing co-chaperones (DNAJB9/ERdj4 or DNAJC10/ERdj5) stimulate the ATPase activity and are required for efficient substrate recognition by HSPA5/BiP. Homooligomerization inactivates participating HSPA5/BiP protomers and probably act as reservoirs to store HSPA5/BiP molecules when they are not needed by the cell. In terms of biological role, endoplasmic reticulum chaperone that plays a key role in protein folding and quality control in the endoplasmic reticulum lumen. Involved in the correct folding of proteins and degradation of misfolded proteins via its interaction with DNAJC10/ERdj5, probably to facilitate the release of DNAJC10/ERdj5 from its substrate. Acts as a key repressor of the EIF2AK3/PERK and ERN1/IRE1-mediated unfolded protein response (UPR). In the unstressed endoplasmic reticulum, recruited by DNAJB9/ERdj4 to the luminal region of ERN1/IRE1, leading to disrupt the dimerization of ERN1/IRE1, thereby inactivating ERN1/IRE1. Also binds and inactivates EIF2AK3/PERK in unstressed cells. Accumulation of misfolded protein in the endoplasmic reticulum causes release of HSPA5/BiP from ERN1/IRE1 and EIF2AK3/PERK, allowing their homodimerization and subsequent activation. Plays an auxiliary role in post-translational transport of small presecretory proteins across endoplasmic reticulum (ER). May function as an allosteric modulator for SEC61 channel-forming translocon complex, likely cooperating with SEC62 to enable the productive insertion of these precursors into SEC61 channel. Appears to specifically regulate translocation of precursors having inhibitory residues in their mature region that weaken channel gating. May also play a role in apoptosis and cell proliferation. Functionally, (Microbial infection) Plays an important role in viral binding to the host cell membrane and entry for several flaviruses such as Dengue virus, Zika virus and Japanese encephalitis virus. Acts as a component of the cellular receptor for Dengue virus serotype 2/DENV-2 on human liver cells. (Microbial infection) Acts as a receptor for CotH proteins expressed by fungi of the order mucorales, the causative agent of mucormycosis, which plays an important role in epithelial cell invasion by the fungi. Acts as a receptor for R.delemar CotH3 in nasal epithelial cells, which may be an early step in rhinoorbital/cerebral mucormycosis (RCM) disease progression. This chain is Endoplasmic reticulum chaperone BiP, found in Homo sapiens (Human).